The following is a 447-amino-acid chain: Adenylosuccinate synthetase (447 aa).

GTP is bound by residues 35-41 and 63-65; these read GDEGKGK and GHT. Aspartate 36 functions as the Proton acceptor in the catalytic mechanism. Aspartate 36 and glycine 63 together coordinate Mg(2+). IMP-binding positions include 36–39, 61–64, threonine 153, arginine 167, asparagine 245, threonine 260, and arginine 324; these read DEGK and NAGH. Residue histidine 64 is the Proton donor of the active site. 320–326 provides a ligand contact to substrate; it reads VTTKRKR. GTP contacts are provided by residues arginine 326, 352 to 354, and 435 to 437; these read KLD and GVG.

This sequence belongs to the adenylosuccinate synthetase family. Homodimer. It depends on Mg(2+) as a cofactor.

The protein localises to the cytoplasm. The catalysed reaction is IMP + L-aspartate + GTP = N(6)-(1,2-dicarboxyethyl)-AMP + GDP + phosphate + 2 H(+). Its pathway is purine metabolism; AMP biosynthesis via de novo pathway; AMP from IMP: step 1/2. Functionally, plays an important role in the de novo pathway and in the salvage pathway of purine nucleotide biosynthesis. Catalyzes the first committed step in the biosynthesis of AMP from IMP. This Drosophila sechellia (Fruit fly) protein is Adenylosuccinate synthetase.